The chain runs to 123 residues: Molluscan insulin-related peptide 1 (123 aa).

The N-terminal stretch at 1–31 (MAGVRLVFTKAFMVTVLLTLLLNIGVKPAEG) is a signal peptide. At Q32 the chain carries Pyrrolidone carboxylic acid. 3 disulfide bridges follow: C48/C109, C60/C122, and C108/C113. The propeptide occupies 68 to 69 (MV). Q99 bears the Pyrrolidone carboxylic acid mark.

It belongs to the insulin family. As to quaternary structure, heterodimer of a B chain and an A chain linked by two disulfide bonds. Expressed in the cerebral light-green cells which are giant neuroendocrines cells involved in the control of growth.

The protein resides in the cytoplasmic vesicle. Its subcellular location is the secretory vesicle. The protein is Molluscan insulin-related peptide 1 of Lymnaea stagnalis (Great pond snail).